An 81-amino-acid chain; its full sequence is Photosystem I iron-sulfur center (81 aa).

2 4Fe-4S ferredoxin-type domains span residues 2–31 (SHSV…MVPW) and 37–68 (GQIA…VRVY). [4Fe-4S] cluster-binding residues include cysteine 11, cysteine 14, cysteine 17, cysteine 21, cysteine 48, cysteine 51, cysteine 54, and cysteine 58.

The eukaryotic PSI reaction center is composed of at least 11 subunits. [4Fe-4S] cluster is required as a cofactor.

The protein localises to the plastid. It localises to the chloroplast thylakoid membrane. It catalyses the reaction reduced [plastocyanin] + hnu + oxidized [2Fe-2S]-[ferredoxin] = oxidized [plastocyanin] + reduced [2Fe-2S]-[ferredoxin]. Its function is as follows. Apoprotein for the two 4Fe-4S centers FA and FB of photosystem I (PSI); essential for photochemical activity. FB is the terminal electron acceptor of PSI, donating electrons to ferredoxin. The C-terminus interacts with PsaA/B/D and helps assemble the protein into the PSI complex. Required for binding of PsaD and PsaE to PSI. PSI is a plastocyanin/cytochrome c6-ferredoxin oxidoreductase, converting photonic excitation into a charge separation, which transfers an electron from the donor P700 chlorophyll pair to the spectroscopically characterized acceptors A0, A1, FX, FA and FB in turn. The protein is Photosystem I iron-sulfur center of Euglena gracilis.